The chain runs to 230 residues: 5'-methylthioadenosine/S-adenosylhomocysteine nucleosidase (230 aa).

The active-site Proton acceptor is E12. Residues G78, I153, and 174–175 (ME) each bind substrate. The Proton donor role is filled by D198.

This sequence belongs to the PNP/UDP phosphorylase family. MtnN subfamily.

The enzyme catalyses S-adenosyl-L-homocysteine + H2O = S-(5-deoxy-D-ribos-5-yl)-L-homocysteine + adenine. It carries out the reaction S-methyl-5'-thioadenosine + H2O = 5-(methylsulfanyl)-D-ribose + adenine. The catalysed reaction is 5'-deoxyadenosine + H2O = 5-deoxy-D-ribose + adenine. Its pathway is amino-acid biosynthesis; L-methionine biosynthesis via salvage pathway; S-methyl-5-thio-alpha-D-ribose 1-phosphate from S-methyl-5'-thioadenosine (hydrolase route): step 1/2. In terms of biological role, catalyzes the irreversible cleavage of the glycosidic bond in both 5'-methylthioadenosine (MTA) and S-adenosylhomocysteine (SAH/AdoHcy) to adenine and the corresponding thioribose, 5'-methylthioribose and S-ribosylhomocysteine, respectively. Also cleaves 5'-deoxyadenosine, a toxic by-product of radical S-adenosylmethionine (SAM) enzymes, into 5-deoxyribose and adenine. In Shewanella halifaxensis (strain HAW-EB4), this protein is 5'-methylthioadenosine/S-adenosylhomocysteine nucleosidase.